The primary structure comprises 634 residues: 1-deoxy-D-xylulose-5-phosphate synthase (634 aa).

Residues histidine 74 and 115–117 (AHS) contribute to the thiamine diphosphate site. Aspartate 146 contributes to the Mg(2+) binding site. Thiamine diphosphate-binding positions include 147-148 (GA), asparagine 176, tyrosine 283, and glutamate 365. Asparagine 176 lines the Mg(2+) pocket.

This sequence belongs to the transketolase family. DXPS subfamily. Homodimer. Mg(2+) is required as a cofactor. It depends on thiamine diphosphate as a cofactor.

It catalyses the reaction D-glyceraldehyde 3-phosphate + pyruvate + H(+) = 1-deoxy-D-xylulose 5-phosphate + CO2. It participates in metabolic intermediate biosynthesis; 1-deoxy-D-xylulose 5-phosphate biosynthesis; 1-deoxy-D-xylulose 5-phosphate from D-glyceraldehyde 3-phosphate and pyruvate: step 1/1. Functionally, catalyzes the acyloin condensation reaction between C atoms 2 and 3 of pyruvate and glyceraldehyde 3-phosphate to yield 1-deoxy-D-xylulose-5-phosphate (DXP). The protein is 1-deoxy-D-xylulose-5-phosphate synthase of Burkholderia mallei (strain ATCC 23344).